The primary structure comprises 333 residues: Trans-enoyl reductase apdC (333 aa).

45 to 48 (FDAK) is a binding site for NADP(+). 131-138 (VGLATVGM) contributes to the substrate binding site. Residues 167–170 (SPHN), Y185, and 232–233 (LD) contribute to the NADP(+) site. A substrate-binding site is contributed by 252–256 (SVTMY). NADP(+) is bound at residue 321-322 (VS).

Belongs to the zinc-containing alcohol dehydrogenase family. In terms of assembly, monomer.

It functions in the pathway secondary metabolite biosynthesis. Functionally, trans-enoyl reductase; part of the gene cluster that mediates the biosynthesis of aspyridones. The polyketide-amino acid backbone preaspyridone A is first assembled by the PKS-NRPS hybrid apdA. The assembly of preaspyridone A is initiated by loading of malonyl-CoA onto apdA, followed by decarboxylation to yield the acetyl starter unit. The growing polyketide chain then elongates into a tetraketide. The adpA PKS module catalyzes three Claisen condensations, as well as beta-keto processing and methylation. Alpha-methylation step during polyketide synthesis is a prerequisite and a key checkpoint for chain transfer between PKS and NRPS modules. The downstream NRPS module contains the condensation (C), adenylation (A), and thiolation (T) domains and catalyzes the incorporation of tyrosine via the formation of the L-tyrosinyl-thioester and the amide linkage between L-tyrosinyl-thioester and the tetraketide. The bimodular assembly line is terminated with a reductase (R) domain that facilitates formation and release of the tetramic acid product. Because apdA lacks a designated enoylreductase (ER) domain, the required activity is provided the enoyl reductase apdC. ApdC appears to operate with different stereoselectivity in different PKS cycle. Combined with apdC, apdA is proposed to synthesize preaspyridone A via about 20 enzymatic steps. A number of oxidative steps performed successively by the cytochrome P450 monooxygenases apdE and apdB are required for the conversion of preaspyridone A to aspyridone A. The cytochrome P450 monooxygenase apdE is responsible for the oxidative dephenylation of preaspyridone A. Finally, the predicted FAD-dependent monooxygenase apdD and the acyl-CoA dehydrogenase apdG may be involved in the transformation of aspyridone A into aspyridone B. The chain is Trans-enoyl reductase apdC from Emericella nidulans (strain FGSC A4 / ATCC 38163 / CBS 112.46 / NRRL 194 / M139) (Aspergillus nidulans).